Reading from the N-terminus, the 242-residue chain is Heme exporter protein C (242 aa).

The next 6 helical transmembrane spans lie at Pro21 to Phe41, Ala61 to Ile81, Ala93 to Gly113, Leu127 to Ile147, Gly158 to Trp178, and Trp201 to Leu221.

It belongs to the CcmC/CycZ/HelC family.

The protein resides in the cell inner membrane. Its function is as follows. Required for the export of heme to the periplasm for the biogenesis of c-type cytochromes. This chain is Heme exporter protein C (helC), found in Rhodobacter capsulatus (strain ATCC BAA-309 / NBRC 16581 / SB1003).